The primary structure comprises 58 residues: UPF0337 protein CE1672 (58 aa).

The segment covering 1-39 (MGLGDKIRNTAEKASGKVKEATGKATDNEKLEAEGKTDQ) has biased composition (basic and acidic residues). Residues 1-58 (MGLGDKIRNTAEKASGKVKEATGKATDNEKLEAEGKTDQFKGNAKNTVENAKDTLRGN) form a disordered region.

The protein belongs to the UPF0337 (CsbD) family.

This Corynebacterium efficiens (strain DSM 44549 / YS-314 / AJ 12310 / JCM 11189 / NBRC 100395) protein is UPF0337 protein CE1672.